We begin with the raw amino-acid sequence, 607 residues long: UvrABC system protein C (607 aa).

The 79-residue stretch at 16–94 (GRPGVYRMFD…IKEWRPPYNI (79 aa)) folds into the GIY-YIG domain. In terms of domain architecture, UVR spans 203-238 (QQLGNELNAEMEKAAMALDFEKAAELRDQIALLRRV).

It belongs to the UvrC family. As to quaternary structure, interacts with UvrB in an incision complex.

The protein localises to the cytoplasm. In terms of biological role, the UvrABC repair system catalyzes the recognition and processing of DNA lesions. UvrC both incises the 5' and 3' sides of the lesion. The N-terminal half is responsible for the 3' incision and the C-terminal half is responsible for the 5' incision. This is UvrABC system protein C from Pseudomonas putida (strain ATCC 47054 / DSM 6125 / CFBP 8728 / NCIMB 11950 / KT2440).